A 279-amino-acid chain; its full sequence is Ankyrin repeat domain-containing protein 7 (279 aa).

Basic residues predominate over residues methionine 1–arginine 11. The disordered stretch occupies residues methionine 1–isoleucine 25. ANK repeat units follow at residues arginine 80–valine 109, glutamate 113–leucine 142, tyrosine 146–alanine 175, aspartate 179–alanine 208, and asparagine 212–histidine 241.

This is Ankyrin repeat domain-containing protein 7 (Ankrd7) from Mus musculus (Mouse).